We begin with the raw amino-acid sequence, 233 residues long: MKNLLPFLTRVPIKGDFEKVREELWAFPLVALVSSALPTLVLYLKLPLSNVLAVLALYFTIGLLHLDGLADFADGVMVKGNRERKIKAMKDLNTGIAGLFAVVMVLFLQVYSLQLVPFYAIFLAELNSKLAMLLALATRKPLGQGLGAYFMERMNSGQLLGGFIFYAILLVPVVVYEQNALVSLLGLAFGGYAIKVALDNFGGINGDCIGAIAEITRAGTLLVVAFAGAYLGG.

Helical transmembrane passes span 24–44 (LWAFPLVALVSSALPTLVLYL), 46–66 (LPLSNVLAVLALYFTIGLLHL), 96–116 (IAGLFAVVMVLFLQVYSLQLV), 117–137 (PFYAIFLAELNSKLAMLLALA), 156–176 (SGQLLGGFIFYAILLVPVVVY), 184–204 (LLGLAFGGYAIKVALDNFGGI), and 209–229 (IGAIAEITRAGTLLVVAFAGA).

The protein belongs to the CobS family. Mg(2+) serves as cofactor.

It localises to the cell membrane. The enzyme catalyses alpha-ribazole + adenosylcob(III)inamide-GDP = adenosylcob(III)alamin + GMP + H(+). It carries out the reaction alpha-ribazole 5'-phosphate + adenosylcob(III)inamide-GDP = adenosylcob(III)alamin 5'-phosphate + GMP + H(+). It participates in cofactor biosynthesis; adenosylcobalamin biosynthesis; adenosylcobalamin from cob(II)yrinate a,c-diamide: step 7/7. In terms of biological role, joins adenosylcobinamide-GDP and alpha-ribazole to generate adenosylcobalamin (Ado-cobalamin). Also synthesizes adenosylcobalamin 5'-phosphate from adenosylcobinamide-GDP and alpha-ribazole 5'-phosphate. The chain is Adenosylcobinamide-GDP ribazoletransferase from Thermococcus onnurineus (strain NA1).